We begin with the raw amino-acid sequence, 338 residues long: Lipoate-protein ligase A (338 aa).

Residues 29–216 enclose the BPL/LPL catalytic domain; that stretch reads PATQRVLFLW…AFFAHYGERV (188 aa). ATP is bound by residues arginine 71, 76-79, and lysine 134; that span reads GAVF. Lysine 134 provides a ligand contact to (R)-lipoate.

Belongs to the LplA family. Monomer.

It is found in the cytoplasm. It carries out the reaction L-lysyl-[lipoyl-carrier protein] + (R)-lipoate + ATP = N(6)-[(R)-lipoyl]-L-lysyl-[lipoyl-carrier protein] + AMP + diphosphate + H(+). The protein operates within protein modification; protein lipoylation via exogenous pathway; protein N(6)-(lipoyl)lysine from lipoate: step 1/2. It participates in protein modification; protein lipoylation via exogenous pathway; protein N(6)-(lipoyl)lysine from lipoate: step 2/2. Its function is as follows. Catalyzes both the ATP-dependent activation of exogenously supplied lipoate to lipoyl-AMP and the transfer of the activated lipoyl onto the lipoyl domains of lipoate-dependent enzymes. The polypeptide is Lipoate-protein ligase A (Salmonella arizonae (strain ATCC BAA-731 / CDC346-86 / RSK2980)).